The following is a 413-amino-acid chain: Tyrosine--tRNA ligase (413 aa).

A 'HIGH' region motif is present at residues 59–68 (PTAPDIHLGH). Residues 243 to 247 (KMSKS) carry the 'KMSKS' region motif. K246 provides a ligand contact to ATP. Residues 351–411 (LAIGQLLKQA…GKRRFARVTL (61 aa)) enclose the S4 RNA-binding domain.

It belongs to the class-I aminoacyl-tRNA synthetase family. TyrS type 2 subfamily. In terms of assembly, homodimer.

The protein resides in the cytoplasm. It catalyses the reaction tRNA(Tyr) + L-tyrosine + ATP = L-tyrosyl-tRNA(Tyr) + AMP + diphosphate + H(+). In terms of biological role, catalyzes the attachment of tyrosine to tRNA(Tyr) in a two-step reaction: tyrosine is first activated by ATP to form Tyr-AMP and then transferred to the acceptor end of tRNA(Tyr). The protein is Tyrosine--tRNA ligase of Burkholderia mallei (strain ATCC 23344).